We begin with the raw amino-acid sequence, 444 residues long: ATP-dependent 6-phosphofructokinase 2 (444 aa).

Ser-55 bears the Phosphoserine mark. Residues Gly-86, 149 to 150 (RG), and 174 to 177 (GDGT) contribute to the ATP site. Residue Asp-175 participates in Mg(2+) binding. Substrate contacts are provided by residues 203–205 (TVD), 248–250 (MGR), Glu-304, and 362–365 (YMIR). The Proton acceptor role is filled by Asp-205.

It belongs to the phosphofructokinase type A (PFKA) family. PPi-dependent PFK group II subfamily. Atypical ATP-dependent clade 'X' sub-subfamily. In terms of assembly, homotetramer. Mg(2+) is required as a cofactor. Mostly expressed in roots and stems.

The protein resides in the cytoplasm. The enzyme catalyses beta-D-fructose 6-phosphate + ATP = beta-D-fructose 1,6-bisphosphate + ADP + H(+). It participates in carbohydrate degradation; glycolysis; D-glyceraldehyde 3-phosphate and glycerone phosphate from D-glucose: step 3/4. Allosterically activated by AMP. Functionally, catalyzes the phosphorylation of D-fructose 6-phosphate to fructose 1,6-bisphosphate by ATP, the first committing step of glycolysis. The protein is ATP-dependent 6-phosphofructokinase 2 of Arabidopsis thaliana (Mouse-ear cress).